A 371-amino-acid polypeptide reads, in one-letter code: Dihydroorotate dehydrogenase (quinone) (371 aa).

FMN contacts are provided by residues 79–83 (AGFDK) and threonine 103. Residue lysine 83 coordinates substrate. Substrate is bound at residue 128–132 (NRMGF). FMN-binding residues include asparagine 156 and asparagine 189. Asparagine 189 is a binding site for substrate. Serine 192 acts as the Nucleophile in catalysis. A substrate-binding site is contributed by asparagine 194. 2 residues coordinate FMN: lysine 225 and threonine 253. Residue 254–255 (NT) coordinates substrate. Residues glycine 279, glycine 308, and 329-330 (YT) each bind FMN.

This sequence belongs to the dihydroorotate dehydrogenase family. Type 2 subfamily. As to quaternary structure, monomer. FMN serves as cofactor.

The protein localises to the cell membrane. It catalyses the reaction (S)-dihydroorotate + a quinone = orotate + a quinol. It participates in pyrimidine metabolism; UMP biosynthesis via de novo pathway; orotate from (S)-dihydroorotate (quinone route): step 1/1. Functionally, catalyzes the conversion of dihydroorotate to orotate with quinone as electron acceptor. In Corynebacterium glutamicum (strain R), this protein is Dihydroorotate dehydrogenase (quinone).